A 566-amino-acid polypeptide reads, in one-letter code: E3 ubiquitin-protein ligase RNF220 (566 aa).

K277 is covalently cross-linked (Glycyl lysine isopeptide (Lys-Gly) (interchain with G-Cter in SUMO2)). Residues 277–297 (KREGESPTASPHSSATDDLHH) are disordered. Residue S390 is modified to Phosphoserine. Residues 485 to 513 (EDSAVTTFEALKARVRELERQLSRGDRYK) are a coiled coil. Residues 514–522 (CLICMDSYS) form a required for targeting to the cytoplasm region. An RING-type zinc finger spans residues 514–553 (CLICMDSYSMPLTSIQCWHVHCEECWLRTLGAKKLCPQCN).

As to quaternary structure, interacts with SIN3B. Interacts with CTNNB1 (via Armadillo repeats 2-8). Interacts with USP7 (via MATH domain). In terms of processing, auto-ubiquitinated; leads to proteasomal degradation. In terms of tissue distribution, ubiquitously expressed. Abundant in brain and spinal cord, particularly in the cerebellum and cerebral cortex. In fetal tissues expressed in the cerebellum, spinal cord and cortex.

Its subcellular location is the cytoplasm. The protein resides in the nucleus. The enzyme catalyses S-ubiquitinyl-[E2 ubiquitin-conjugating enzyme]-L-cysteine + [acceptor protein]-L-lysine = [E2 ubiquitin-conjugating enzyme]-L-cysteine + N(6)-ubiquitinyl-[acceptor protein]-L-lysine.. Its pathway is protein modification; protein ubiquitination. In terms of biological role, E3 ubiquitin-protein ligase that promotes the ubiquitination and proteasomal degradation of SIN3B. Independently of its E3 ligase activity, acts as a CTNNB1 stabilizer through USP7-mediated deubiquitination of CTNNB1 promoting Wnt signaling. Plays a critical role in the regulation of nuclear lamina. This is E3 ubiquitin-protein ligase RNF220 (RNF220) from Homo sapiens (Human).